The sequence spans 385 residues: Putative cell agglutination protein pfl8 (385 aa).

Residues 1–20 (MNSYISLIFTLLFFTSAARS) form the signal peptide. The interval 41–90 (SSEFTSTITPETPSSSSSTFVPISTHTSSATNTTSGQLSISSSSSTSSEY) is disordered. 3 N-linked (GlcNAc...) asparagine glycosylation sites follow: N72, N270, and N346. Residues 196 to 360 (EVSTFNKPAY…GPVRTTSYSY (165 aa)) enclose the PA14 domain.

The protein localises to the secreted. It localises to the cell surface. In terms of biological role, may be involved in agglutination during conjugation or other aspects of colony formation. Induces flocculation when overexpressed. The chain is Putative cell agglutination protein pfl8 from Schizosaccharomyces pombe (strain 972 / ATCC 24843) (Fission yeast).